A 2110-amino-acid chain; its full sequence is Protein Ycf2 (2110 aa).

The tract at residues 190-209 is disordered; it reads DSSQLKGSSDQSRDPLDSIS. 1442 to 1449 is a binding site for ATP; it reads GSIGTGRS.

Belongs to the Ycf2 family.

Its subcellular location is the plastid. The protein resides in the chloroplast stroma. Probable ATPase of unknown function. Its presence in a non-photosynthetic plant (Epifagus virginiana) and experiments in tobacco indicate that it has an essential function which is probably not related to photosynthesis. This chain is Protein Ycf2, found in Panax ginseng (Korean ginseng).